The chain runs to 385 residues: UPF0284 protein P9215_05181 (385 aa).

Belongs to the UPF0284 family.

The chain is UPF0284 protein P9215_05181 from Prochlorococcus marinus (strain MIT 9215).